A 1411-amino-acid chain; its full sequence is Zinc finger protein 609 (1411 aa).

Disordered regions lie at residues 1–26 (MSLS…SGDE), 47–190 (QKLE…QPVP), 353–484 (PRFC…EPTV), 517–659 (AHAH…ARPI), 679–963 (ASPG…VIQQ), 1005–1125 (YEEQ…RQAE), 1153–1221 (KSED…LTQH), and 1270–1367 (GSKV…STHH). Residues S358, S361, and S379 each carry the phosphoserine modification. A compositionally biased stretch (polar residues) spans 377 to 401 (PNSNTPVNETATASDSKGTSNSSKT). T381 carries the phosphothreonine modification. 6 positions are modified to phosphoserine: S413, S433, S446, S452, S467, and S470. Residues 423-437 (ASSTSEDVKASPSSA) show a composition bias toward polar residues. K479 is covalently cross-linked (Glycyl lysine isopeptide (Lys-Gly) (interchain with G-Cter in SUMO2)). A C2H2-type zinc finger spans residues 495–520 (IDCPHPNCNKKYKHINGLKYHQAHAH). Residues 519–529 (AHTDDDSKPEA) show a composition bias toward basic and acidic residues. A Phosphoserine modification is found at S533. The segment covering 549-563 (NGASVSQKGSLSPAR) has biased composition (polar residues). Residues S576 and S578 each carry the phosphoserine modification. Residues 626 to 649 (SLERKCMEKEKCKKPSSLKPEKIP) are compositionally biased toward basic and acidic residues. A compositionally biased stretch (polar residues) spans 679-700 (ASPGSSSGLTATVAQAMPNSPQ). The span at 726–736 (DKKKKDKKKKE) shows a compositional bias: basic residues. S743 is subject to Phosphoserine. T746 bears the Phosphothreonine mark. A compositionally biased stretch (basic and acidic residues) spans 751–764 (CRAEEGKSPFRESS). A Phosphoserine modification is found at S758. K789 participates in a covalent cross-link: Glycyl lysine isopeptide (Lys-Gly) (interchain with G-Cter in SUMO2). The segment covering 798-844 (FTDNAPSPSIGGSSRLENTTPTQPLTPLHVVTQNGAEASSVKTNSPA) has biased composition (polar residues). A Phosphoserine modification is found at S804. T823 carries the post-translational modification Phosphothreonine. Residues S842, S846, and S849 each carry the phosphoserine modification. Positions 855-876 (GEGKVDSVKSKDAEQLVKEGAK) are enriched in basic and acidic residues. Residues 897–908 (SYYSPSYAQSSP) show a composition bias toward low complexity. The span at 926-950 (TKRDEEPESIEGKVKNDICEEKKPE) shows a compositional bias: basic and acidic residues. A compositionally biased stretch (low complexity) spans 952–963 (SSSSQQPSVIQQ). Residues 1020 to 1042 (GVDKKAEMGLKEREAALKEEWKQ) are compositionally biased toward basic and acidic residues. S1055 is subject to Phosphoserine. K1061 is covalently cross-linked (Glycyl lysine isopeptide (Lys-Gly) (interchain with G-Cter in SUMO2)). Composition is skewed to basic and acidic residues over residues 1097-1113 (LKVK…EASE), 1153-1187 (KSED…KEST), and 1195-1208 (TSEE…EPRP). K1153 participates in a covalent cross-link: Glycyl lysine isopeptide (Lys-Gly) (interchain with G-Cter in SUMO2). The span at 1286–1296 (PSVTCKSSSES) shows a compositional bias: polar residues. Residue K1297 forms a Glycyl lysine isopeptide (Lys-Gly) (interchain with G-Cter in SUMO2) linkage. The span at 1328–1337 (GCGVVGGGGS) shows a compositional bias: gly residues.

As to quaternary structure, interacts (via N-terminus) with NIPBL. Interacts with INTS13; promoting association with the integrator complex. Isoform 1: Expressed in myoblasts and myotubes. Isoform 2: Expressed in myoblasts and myotubes, with a preference in undifferentiated myoblasts.

Its subcellular location is the nucleus. In terms of biological role, transcription factor, which activates RAG1, and possibly RAG2, transcription. Through the regulation of RAG1/2 expression, may regulate thymocyte maturation. Along with NIPBL and the multiprotein complex Integrator, promotes cortical neuron migration during brain development by regulating the transcription of crucial genes in this process. Preferentially binds promoters containing paused RNA polymerase II. Up-regulates the expression of SEMA3A, NRP1, PLXND1 and GABBR2 genes, among others. Its function is as follows. Involved in the regulation of myoblast proliferation during myogenesis. The chain is Zinc finger protein 609 from Homo sapiens (Human).